A 421-amino-acid polypeptide reads, in one-letter code: Imidazolonepropionase (421 aa).

Fe(3+) contacts are provided by histidine 81 and histidine 83. 2 residues coordinate Zn(2+): histidine 81 and histidine 83. 4-imidazolone-5-propanoate is bound by residues arginine 90, tyrosine 153, and histidine 186. An N-formimidoyl-L-glutamate-binding site is contributed by tyrosine 153. Histidine 251 serves as a coordination point for Fe(3+). A Zn(2+)-binding site is contributed by histidine 251. Glutamate 254 contacts 4-imidazolone-5-propanoate. Residue aspartate 326 coordinates Fe(3+). Residue aspartate 326 participates in Zn(2+) binding. Asparagine 328 and glycine 330 together coordinate N-formimidoyl-L-glutamate. Residue serine 331 coordinates 4-imidazolone-5-propanoate.

This sequence belongs to the metallo-dependent hydrolases superfamily. HutI family. Zn(2+) is required as a cofactor. Requires Fe(3+) as cofactor.

Its subcellular location is the cytoplasm. The catalysed reaction is 4-imidazolone-5-propanoate + H2O = N-formimidoyl-L-glutamate. It participates in amino-acid degradation; L-histidine degradation into L-glutamate; N-formimidoyl-L-glutamate from L-histidine: step 3/3. In terms of biological role, catalyzes the hydrolytic cleavage of the carbon-nitrogen bond in imidazolone-5-propanoate to yield N-formimidoyl-L-glutamate. It is the third step in the universal histidine degradation pathway. The protein is Imidazolonepropionase of Streptococcus pyogenes serotype M4 (strain MGAS10750).